Reading from the N-terminus, the 530-residue chain is Methionine--tRNA ligase (530 aa).

A 'HIGH' region motif is present at residues 18–28 (YYVNDVPHIGS). Zn(2+) contacts are provided by cysteine 133, cysteine 136, cysteine 151, and histidine 154. A 'KMSKS' region motif is present at residues 307–311 (KMGKS). Lysine 310 is a binding site for ATP.

Belongs to the class-I aminoacyl-tRNA synthetase family. MetG type 2A subfamily. In terms of assembly, monomer. Zn(2+) is required as a cofactor.

The protein localises to the cytoplasm. The catalysed reaction is tRNA(Met) + L-methionine + ATP = L-methionyl-tRNA(Met) + AMP + diphosphate. In terms of biological role, is required not only for elongation of protein synthesis but also for the initiation of all mRNA translation through initiator tRNA(fMet) aminoacylation. The polypeptide is Methionine--tRNA ligase (Nostoc sp. (strain PCC 7120 / SAG 25.82 / UTEX 2576)).